The primary structure comprises 170 residues: Adenine phosphoribosyltransferase (170 aa).

The protein belongs to the purine/pyrimidine phosphoribosyltransferase family. Homodimer.

It is found in the cytoplasm. The enzyme catalyses AMP + diphosphate = 5-phospho-alpha-D-ribose 1-diphosphate + adenine. Its pathway is purine metabolism; AMP biosynthesis via salvage pathway; AMP from adenine: step 1/1. Its function is as follows. Catalyzes a salvage reaction resulting in the formation of AMP, that is energically less costly than de novo synthesis. In Bacillus cereus (strain G9842), this protein is Adenine phosphoribosyltransferase.